The sequence spans 1061 residues: Atrial natriuretic peptide receptor 1 (1061 aa).

A signal peptide spans 1-32; the sequence is MPGPRRPAGSRLRLLLLLLLPPLLLLLRGSHA. The Extracellular segment spans residues 33–473; that stretch reads GNLTVAVVLP…CNQDHLSTLE (441 aa). 2 N-linked (GlcNAc...) asparagine glycosylation sites follow: Asn-34 and Asn-45. Ser-85, Gly-117, and Cys-118 together coordinate chloride. 2 disulfide bridges follow: Cys-92/Cys-118 and Cys-196/Cys-245. Asn-212, Asn-338, Asn-379, Asn-386, and Asn-427 each carry an N-linked (GlcNAc...) asparagine glycan. A disulfide bond links Cys-455 and Cys-464. A helical transmembrane segment spans residues 474-494; sequence VLALVGSLSLLGILIVSFFIY. Over 495–1061 the chain is Cytoplasmic; the sequence is RKMQLEKELA…LGERGSSTRG (567 aa). Ser-519 and Ser-529 each carry phosphoserine. The 278-residue stretch at 528 to 805 folds into the Protein kinase domain; sequence GSRLTLSGRG…QIRLTLRKFN (278 aa). At Thr-532 the chain carries Phosphothreonine. Residues Ser-534, Ser-538, and Ser-542 each carry the phosphoserine modification. The residue at position 545 (Thr-545) is a Phosphothreonine. Residues 876 to 1006 form the Guanylate cyclase domain; sequence TIYFSDIVGF…DTVNTASRME (131 aa).

It belongs to the adenylyl cyclase class-4/guanylyl cyclase family. As to quaternary structure, homodimer. In terms of processing, phosphorylation of the protein kinase-like domain is required for full activation by ANP.

The protein resides in the membrane. The enzyme catalyses GTP = 3',5'-cyclic GMP + diphosphate. In terms of biological role, receptor for the atrial natriuretic peptide NPPA/ANP and the brain natriuretic peptide NPPB/BNP which are potent vasoactive hormones playing a key role in cardiovascular homeostasis. Plays an essential role in the regulation of endothelial cell senescence and vascular aging. Upon activation by ANP or BNP, stimulates the production of cyclic guanosine monophosphate (cGMP) that promotes vascular tone and volume homeostasis by activation of protein kinase cGMP-dependent 1/PRKG1 and subsequently PRKAA1, thereby controlling blood pressure and maintaining cardiovascular homeostasis. The protein is Atrial natriuretic peptide receptor 1 of Homo sapiens (Human).